The chain runs to 226 residues: AA9 family lytic polysaccharide monooxygenase E (226 aa).

A signal peptide spans 1–18 (MLANGAIVFLAAALGVSG). Residue His19 coordinates Cu(2+). 2 disulfides stabilise this stretch: Cys56–Cys174 and Cys144–Cys226. Asn69 carries an N-linked (GlcNAc...) asparagine glycan. Residue His86 participates in Cu(2+) binding. Residues His160 and Gln169 each contribute to the O2 site. Tyr171 serves as a coordination point for Cu(2+).

It belongs to the polysaccharide monooxygenase AA9 family. Requires Cu(2+) as cofactor.

The protein resides in the secreted. The enzyme catalyses [(1-&gt;4)-beta-D-glucosyl]n+m + reduced acceptor + O2 = 4-dehydro-beta-D-glucosyl-[(1-&gt;4)-beta-D-glucosyl]n-1 + [(1-&gt;4)-beta-D-glucosyl]m + acceptor + H2O.. Its function is as follows. Lytic polysaccharide monooxygenase (LPMO) that depolymerizes crystalline and amorphous polysaccharides via the oxidation of scissile alpha- or beta-(1-4)-glycosidic bonds, yielding C1 and C4 oxidation products. Catalysis by LPMOs requires the reduction of the active-site copper from Cu(II) to Cu(I) by a reducing agent and H(2)O(2) or O(2) as a cosubstrate. Shows endoglucanase activity on tamarind xyloglucan, as well as on beechwood xylan when combined with phosphoric acid swollen cellulose (PASC). Shows no activity on wheat arabinoxylan, konjac glucomannan, acetylated spruce galactoglucomannan, or cellopentaose. The polypeptide is AA9 family lytic polysaccharide monooxygenase E (Thermothielavioides terrestris (strain ATCC 38088 / NRRL 8126) (Thielavia terrestris)).